The primary structure comprises 114 residues: Phosphoribosyl-AMP cyclohydrolase (114 aa).

Residue aspartate 80 participates in Mg(2+) binding. Cysteine 81 lines the Zn(2+) pocket. Mg(2+) contacts are provided by aspartate 82 and aspartate 84. Zn(2+) is bound by residues cysteine 97 and cysteine 104.

The protein belongs to the PRA-CH family. As to quaternary structure, homodimer. The cofactor is Mg(2+). It depends on Zn(2+) as a cofactor.

Its subcellular location is the cytoplasm. It catalyses the reaction 1-(5-phospho-beta-D-ribosyl)-5'-AMP + H2O = 1-(5-phospho-beta-D-ribosyl)-5-[(5-phospho-beta-D-ribosylamino)methylideneamino]imidazole-4-carboxamide. The protein operates within amino-acid biosynthesis; L-histidine biosynthesis; L-histidine from 5-phospho-alpha-D-ribose 1-diphosphate: step 3/9. Catalyzes the hydrolysis of the adenine ring of phosphoribosyl-AMP. This chain is Phosphoribosyl-AMP cyclohydrolase, found in Rhodococcus jostii (strain RHA1).